A 238-amino-acid polypeptide reads, in one-letter code: Pre-protein VI (238 aa).

A propeptide spanning residues 1–33 (MDAVNFSILAPRYGSHPMMSAWSGIGTSDMNGG) is cleaved from the precursor. The tract at residues 34-54 (AFNWGGIWSGIKNFGSNVKNW) is amphipathic alpha-helix essential for membrane lytic activity. An involved in endosomal membrane lysis region spans residues 36–53 (NWGGIWSGIKNFGSNVKN). Residues 48 to 74 (GSNVKNWGSRAWNSQTGKLLRQKLNDT) are interaction with hexon protein. Positions 67 to 76 (LRQKLNDTKV) match the Nuclear export signal motif. The PPXY motif signature appears at 153–156 (PPSY). Positions 187–212 (TLELKPSDQPPPYSPQSSNMPVTAPV) are disordered. Residues 219 to 230 (GTLANIVGVGLS) carry the Nuclear export signal motif. The segment at 221-227 (LANIVGV) is interaction with hexon protein. A binds to importin alpha/beta, involved in hexon nuclear import region spans residues 228–238 (GLSNVKRRRCF). Positions 233–236 (KRRR) match the Nuclear localization signal motif.

It belongs to the adenoviridae protein VI family. As to quaternary structure, interacts with hexon protein; this interaction allows nuclear import of hexon trimers and possibly pre-capsid assembly. Interacts (via C-terminal NLS) with importin alpha/beta. In terms of assembly, interacts (via PPxY motif) with host NEDD4 ubiquitine ligase; this interaction might play a role in virus intracellular transport during entry. Part of a complex composed of the core-capsid bridging protein, the endosome lysis protein VI and the hexon-linking protein VIII; these interactions bridge the virus core to the capsid. Interacts with peripentonal hexons; this interaction stabilizes the capsid by gluing two peripentonal hexons together and joining them with an adjacent group-of-nine hexon. Heterodimer with the viral protease; disulfide-linked. Interacts with the viral protease. Post-translationally, ubiquitinated by Nedd4 following partial capsid disassembly; which might play a role in intracellular virus movement during entry. Contains the major nuclear import and export signals. Proteolytically removed during virion maturation. The processing of the C-terminus turns the precursor into a mature viral structural protein and abrogates its ability to promote hexon import and act as a potential chaperone protein.

Its subcellular location is the host nucleus. The protein localises to the host cytoplasm. The protein resides in the virion. During virus assembly, promotes hexon trimers nuclear import through nuclear pore complexes via an importin alpha/beta-dependent mechanism. By analogy to herpesviruses capsid assembly, might act as a chaperone to promote the formation of the icosahedral capsid. Its function is as follows. Structural component of the virion that provides increased stability to the particle shell through its interaction with the core-capsid bridging protein and the hexon-linking protein VIII. Fibers shedding during virus entry into host cell allows the endosome lysis protein to be exposed as a membrane-lytic peptide. Exhibits pH-independent membrane fragmentation activity and probably mediates viral rapid escape from host endosome via organellar membrane lysis. It is not clear if it then remains partially associated with the capsid and involved in the intracellular microtubule-dependent transport of capsid to the nucleus, or if it is lost during endosomal penetration. In terms of biological role, cofactor that activates the viral protease. Binds to viral protease in a 1:1 ratio. This chain is Pre-protein VI, found in Canine adenovirus serotype 1 (strain CLL) (CAdV-1).